A 411-amino-acid polypeptide reads, in one-letter code: Tyrosine--tRNA ligase (411 aa).

Tyr34 lines the L-tyrosine pocket. A 'HIGH' region motif is present at residues 39–48 (CTATSLHIGS). Residues Tyr171 and Gln175 each coordinate L-tyrosine. A 'KMSKS' region motif is present at residues 231 to 235 (KMGKT). Position 234 (Lys234) interacts with ATP. Residues 345–411 (ISAYELFHEA…GKKRHILVRV (67 aa)) form the S4 RNA-binding domain.

The protein belongs to the class-I aminoacyl-tRNA synthetase family. TyrS type 1 subfamily. Homodimer.

It is found in the cytoplasm. The catalysed reaction is tRNA(Tyr) + L-tyrosine + ATP = L-tyrosyl-tRNA(Tyr) + AMP + diphosphate + H(+). Functionally, catalyzes the attachment of tyrosine to tRNA(Tyr) in a two-step reaction: tyrosine is first activated by ATP to form Tyr-AMP and then transferred to the acceptor end of tRNA(Tyr). The sequence is that of Tyrosine--tRNA ligase from Rickettsia africae (strain ESF-5).